The following is a 248-amino-acid chain: 2,3-bisphosphoglycerate-dependent phosphoglycerate mutase 2 (248 aa).

Substrate contacts are provided by residues 8–15 (RHGESAWN), 21–22 (TG), Arg60, 87–90 (EKHY), Lys98, 114–115 (RR), and 183–184 (GN). Residue His9 is the Tele-phosphohistidine intermediate of the active site. Glu87 serves as the catalytic Proton donor/acceptor.

It belongs to the phosphoglycerate mutase family. BPG-dependent PGAM subfamily.

It catalyses the reaction (2R)-2-phosphoglycerate = (2R)-3-phosphoglycerate. The protein operates within carbohydrate degradation; glycolysis; pyruvate from D-glyceraldehyde 3-phosphate: step 3/5. Its function is as follows. Catalyzes the interconversion of 2-phosphoglycerate and 3-phosphoglycerate. This is 2,3-bisphosphoglycerate-dependent phosphoglycerate mutase 2 from Bacteroides thetaiotaomicron (strain ATCC 29148 / DSM 2079 / JCM 5827 / CCUG 10774 / NCTC 10582 / VPI-5482 / E50).